Reading from the N-terminus, the 284-residue chain is 4-diphosphocytidyl-2-C-methyl-D-erythritol kinase (284 aa).

Lys14 is an active-site residue. Residue 98-108 (PMGGGLGGGSS) coordinates ATP. Asp140 is a catalytic residue.

Belongs to the GHMP kinase family. IspE subfamily.

The enzyme catalyses 4-CDP-2-C-methyl-D-erythritol + ATP = 4-CDP-2-C-methyl-D-erythritol 2-phosphate + ADP + H(+). It participates in isoprenoid biosynthesis; isopentenyl diphosphate biosynthesis via DXP pathway; isopentenyl diphosphate from 1-deoxy-D-xylulose 5-phosphate: step 3/6. Catalyzes the phosphorylation of the position 2 hydroxy group of 4-diphosphocytidyl-2C-methyl-D-erythritol. The chain is 4-diphosphocytidyl-2-C-methyl-D-erythritol kinase from Shewanella sp. (strain MR-7).